A 1165-amino-acid chain; its full sequence is MAAARNATNNDKTLKNGRDVSRLSFAKITDTLTVPDLLALQTESFDWLVGNDAWQARVAAAEAQGRQDLPAATGLEEIFEEISPIEDLGETMQLSFTNPFLEEKKYSIDECKEKGRTYAAPLYVEAEFMNHLTGEIKTQTVFMGDFPLMTERGTFIINGTERVVVSQLVRSPGVYFEAAADKTSDKDIYSARVIPSRGSWLEFEIDKRDQVGVRIDRKRKQSVTVFLKALGLTSEEILAEFAGFQSIELTLEKDAILTKEEALKDIYRKLRPGEQVAAEAARALLDNFYFNPKRYDLAKVGRYKINRKLGLEAPLTDSVLTVQDIIATIKYLVSLHDGQTSFTGLRSGVETDIRLDIDDIDHFGNRRIRAVGELIQNQVRTGLSRMERVVRERMTTQDIEAITPQTLINVRPVVAAIKEFFGTSQLSQFMDQNNPLAGLTHKRRLSALGPGGLSRERAGVEVRDVHPSHYGRMCPIETPEGPNIGLIGSLASFARINSFGFIETPYRKVVDGLVTDQIDYLTASEEDDFVVAQANAPLDARGHFVEERVLARQKGGEVDLVPAEEIGYMDVSPRQMVSVGTSLIPFLEHDDANRALMGANMQRQAVPLLRSESPVVGTGMEGYAAIDAGDVVIAEKSGIVSEVSADAVTVQADDGTVKTYYLRKFDRSNQGTSYNHRVVVDEGDRIEAGEVVADGPATENGELALGKNLLVAFMPWEGHNFEDAIILSQNLVKDDTLSSIHIEEYEVDARDTKLGKEEITRDLPNVSPDLLADLDERGIIRIGAEVRPGDILVGKVTPKGETELSAEERLLRAIFNEKSREVRDTSLKVPHGEEGTIIGVKVFDAQDGDDELGSGVNQRVVVYIAQKRKITAGDKLAGRHGNKGVISKILPVEDMPFLADGTPVDVILNPLGVPGRMNFGQVLEIHLGWIAKNGWEIKGKPKWAAELPETAFSAAPNTKVATPVFDGAKEEEIAGLLDVTLPTRDGDRLIGSSGKTQLFDGRSGEPYPDPVSVGYMYILKLHHLVDDKIHARSTGPYSMITQQPLGGKAQFGGQRFGEMEVWALEAYGAAYALQELLTIKSDDILGRVKVYEAIVKGENIQEPGIPESFKVLIKEMQSLCLNVEVLSADGQAVSLRDADDEAFRAAEELGINISSRFESSSIDEI.

It belongs to the RNA polymerase beta chain family. The RNAP catalytic core consists of 2 alpha, 1 beta, 1 beta' and 1 omega subunit. When a sigma factor is associated with the core the holoenzyme is formed, which can initiate transcription.

It catalyses the reaction RNA(n) + a ribonucleoside 5'-triphosphate = RNA(n+1) + diphosphate. Its function is as follows. DNA-dependent RNA polymerase catalyzes the transcription of DNA into RNA using the four ribonucleoside triphosphates as substrates. In Leifsonia xyli subsp. xyli (strain CTCB07), this protein is DNA-directed RNA polymerase subunit beta.